Consider the following 210-residue polypeptide: Thymidylate kinase (210 aa).

Residue Asp-17 participates in dGMP binding. Residue Asp-17 coordinates dTMP. The ATP site is built by Arg-18, Ser-19, Gly-20, Lys-21, Ser-22, and Thr-23. DTMP-binding residues include Arg-47, Phe-74, Arg-78, Arg-99, and Tyr-107. DGMP is bound by residues Phe-74, Arg-78, Arg-99, Tyr-107, Ser-108, and Tyr-153. Residues 143 to 155 are LID; it reads QNRSDYGEEIYEK. Residue Arg-182 coordinates ATP.

The protein belongs to the thymidylate kinase family. Homodimer. Binds two dTMP molecules per dimer. Binds only one dTGP molecule per dimer.

The catalysed reaction is dTMP + ATP = dTDP + ADP. The enzyme catalyses dGMP + ATP = dGDP + ADP. It participates in pyrimidine metabolism; dTTP biosynthesis. Inhibited by deoxyguanosine (dG), deoxythymidine (dT) and azidothymidine (AZT). In terms of biological role, catalyzes the phosphorylation of thymidine monophosphate (dTMP) to thymidine diphosphate (dTDP), the immediate precursor for the DNA building block dTTP. Can also phosphorylate dGMP and to a lesser extent GMP, dUMP and dIMP. Can use either ATP or dATP as phosphate donors in presence of Mg(2+). This is Thymidylate kinase from Plasmodium falciparum (isolate 3D7).